Reading from the N-terminus, the 531-residue chain is Peptide chain release factor 3 (531 aa).

Residues 10-278 enclose the tr-type G domain; that stretch reads RRRRTFAIIS…SLIDWAPAPK (269 aa). GTP contacts are provided by residues 19–26, 87–91, and 141–144; these read SHPDAGKT, DTPGH, and NKYD.

Belongs to the TRAFAC class translation factor GTPase superfamily. Classic translation factor GTPase family. PrfC subfamily.

The protein resides in the cytoplasm. Functionally, increases the formation of ribosomal termination complexes and stimulates activities of RF-1 and RF-2. It binds guanine nucleotides and has strong preference for UGA stop codons. It may interact directly with the ribosome. The stimulation of RF-1 and RF-2 is significantly reduced by GTP and GDP, but not by GMP. This Neisseria meningitidis serogroup B (strain ATCC BAA-335 / MC58) protein is Peptide chain release factor 3.